Consider the following 1040-residue polypeptide: Multidrug resistance protein MdtB (1040 aa).

The next 11 membrane-spanning stretches (helical) occupy residues 15 to 37 (LFIL…GIIG), 343 to 365 (VQFE…LRNA), 369 to 391 (LIPS…FLGF), 398 to 420 (LMAL…ENIA), 440 to 462 (IGFT…LFMG), 474 to 496 (VTLA…MMCA), 535 to 557 (HPWL…YIWI), 867 to 889 (VWLI…ESFI), 909 to 931 (LMMA…IGIV), 968 to 990 (ILMT…GVGA), and 1000 to 1022 (MVGG…YLLF).

It belongs to the resistance-nodulation-cell division (RND) (TC 2.A.6) family. MdtB subfamily. As to quaternary structure, part of a tripartite efflux system composed of MdtA, MdtB and MdtC. MdtB forms a heteromultimer with MdtC.

Its subcellular location is the cell inner membrane. The protein is Multidrug resistance protein MdtB of Pectobacterium atrosepticum (strain SCRI 1043 / ATCC BAA-672) (Erwinia carotovora subsp. atroseptica).